A 545-amino-acid chain; its full sequence is Prolyl 3-hydroxylase OGFOD1 (545 aa).

Residues 1–23 (MNGKRPADPGPARPMKKGKKQVS) form a disordered region. Positions 137–239 (PTIDMSCAKY…RLSISGWFYG (103 aa)) constitute a Fe2OG dioxygenase domain. His155 and Asp157 together coordinate Fe cation. Tyr169 is a binding site for 2-oxoglutarate. His218 serves as a coordination point for Fe cation. Residue Arg230 participates in 2-oxoglutarate binding. Acidic residues predominate over residues 371 to 380 (SEDDETEEKG). The tract at residues 371 to 437 (SEDDETEEKG…EAKKESSVPM (67 aa)) is disordered. Over residues 383–393 (ETASAAAGTEE) the composition is skewed to low complexity. The span at 402-417 (PENNQVAAGSHSQENG) shows a compositional bias: polar residues.

The protein belongs to the TPA1 family. In terms of assembly, monomer. Fe(2+) is required as a cofactor. L-ascorbate serves as cofactor.

The protein localises to the cytoplasm. It localises to the nucleus. It carries out the reaction [ribosomal protein uS12]-L-proline + 2-oxoglutarate + O2 = [ribosomal protein uS12]-(3S)-3-hydroxy-L-proline + succinate + CO2. Prolyl 3-hydroxylase that catalyzes 3-hydroxylation of 'Pro-62' of small ribosomal subunit uS12 (RPS23), thereby regulating protein translation termination efficiency. Involved in stress granule formation. The sequence is that of Prolyl 3-hydroxylase OGFOD1 (Ogfod1) from Mus musculus (Mouse).